Reading from the N-terminus, the 154-residue chain is Ribonuclease 8 (154 aa).

The signal sequence occupies residues 1–27 (MAPARAGCCALLLLLLGLWVAEIPVSA). His-42 (proton acceptor) is an active-site residue. Cystine bridges form between Cys-64-Cys-118, Cys-82-Cys-133, and Cys-89-Cys-96. Residues 65–69 (KDLNT) and Lys-90 contribute to the substrate site. Catalysis depends on His-149, which acts as the Proton donor.

It belongs to the pancreatic ribonuclease family.

It localises to the secreted. Its function is as follows. Has a low ribonuclease activity. The chain is Ribonuclease 8 (RNASE8) from Pongo pygmaeus (Bornean orangutan).